A 175-amino-acid chain; its full sequence is ATP-dependent protease subunit HslV (175 aa).

Residue Thr2 is part of the active site. Residues Ala156, Cys159, and Thr162 each contribute to the Na(+) site.

It belongs to the peptidase T1B family. HslV subfamily. As to quaternary structure, a double ring-shaped homohexamer of HslV is capped on each side by a ring-shaped HslU homohexamer. The assembly of the HslU/HslV complex is dependent on binding of ATP.

The protein resides in the cytoplasm. The catalysed reaction is ATP-dependent cleavage of peptide bonds with broad specificity.. Its activity is regulated as follows. Allosterically activated by HslU binding. Its function is as follows. Protease subunit of a proteasome-like degradation complex believed to be a general protein degrading machinery. This Rhizobium etli (strain CIAT 652) protein is ATP-dependent protease subunit HslV.